We begin with the raw amino-acid sequence, 334 residues long: DNA-directed RNA polymerase subunit alpha (334 aa).

Positions 1 to 233 (MADQTISNVL…NLFTPLVSQE (233 aa)) are alpha N-terminal domain (alpha-NTD). The alpha C-terminal domain (alpha-CTD) stretch occupies residues 263 to 334 (DNENSYNLYN…QLKKRFKIQL (72 aa)).

The protein belongs to the RNA polymerase alpha chain family. In terms of assembly, in plastids the minimal PEP RNA polymerase catalytic core is composed of four subunits: alpha, beta, beta', and beta''. When a (nuclear-encoded) sigma factor is associated with the core the holoenzyme is formed, which can initiate transcription.

It localises to the plastid. Its subcellular location is the chloroplast. The catalysed reaction is RNA(n) + a ribonucleoside 5'-triphosphate = RNA(n+1) + diphosphate. DNA-dependent RNA polymerase catalyzes the transcription of DNA into RNA using the four ribonucleoside triphosphates as substrates. This chain is DNA-directed RNA polymerase subunit alpha, found in Chaetosphaeridium globosum (Charophycean green alga).